The sequence spans 422 residues: MYKFRIQGSDKPLSGEVTISGAKNAALPILFASLLAEEPVEVANVPKLRDVDTTMELLKRLGAEVSRNGSVHIDASGVNDFCAPYDLVKTMRASIWALGPLVARFGKGQVSLPGGCAIGARPVDLHIHGLEQLGATIKLEEGYVKAEVDGRLKGAHIVMDKVSVGATITVMCAATLAEGTTVLENAAREPEIVDTANFLNAIGAKVSGMGTDTITIEGVERLGGGYHEVVADRIETGTFLVAAAVSGGKIVCKNTKAHLLEAVLAKLEEAGADVQTGDDWISLDMTGRELKAVNIRTAPHPAFPTDMQAQFTLLNMMAKGSGIITETIFENRFMHIPELQRMGAHAEIEGNTAICGDTDGLSGAQVMATDLRASASLVIAGCIAKGETIVDRIYHIDRGYDKIEDKLTALGANIERVHSDDL.

23-24 lines the phosphoenolpyruvate pocket; that stretch reads KN. R92 contacts UDP-N-acetyl-alpha-D-glucosamine. C116 acts as the Proton donor in catalysis. A 2-(S-cysteinyl)pyruvic acid O-phosphothioketal modification is found at C116. UDP-N-acetyl-alpha-D-glucosamine contacts are provided by residues 121-125, 161-165, D306, and I328; these read RPVDL and KVSVG.

Belongs to the EPSP synthase family. MurA subfamily.

It is found in the cytoplasm. It catalyses the reaction phosphoenolpyruvate + UDP-N-acetyl-alpha-D-glucosamine = UDP-N-acetyl-3-O-(1-carboxyvinyl)-alpha-D-glucosamine + phosphate. The protein operates within cell wall biogenesis; peptidoglycan biosynthesis. Its function is as follows. Cell wall formation. Adds enolpyruvyl to UDP-N-acetylglucosamine. This chain is UDP-N-acetylglucosamine 1-carboxyvinyltransferase, found in Aliivibrio fischeri (strain MJ11) (Vibrio fischeri).